The sequence spans 509 residues: Scavenger receptor class B member 1 (509 aa).

Topologically, residues 1-11 (MGSRSRARQVA) are cytoplasmic. A helical transmembrane segment spans residues 12–32 (AALGFVGLLLAALGAVMIVMV). Over 33-439 (PSIIKQQVLK…FYTQLVLMPK (407 aa)) the chain is Extracellular. Asn-102, Asn-108, Asn-173, Asn-212, Asn-255, Asn-310, Asn-330, and Asn-383 each carry an N-linked (GlcNAc...) asparagine glycan. An intrachain disulfide couples Cys-251 to Cys-384. The chain crosses the membrane as a helical span at residues 440–460 (VLHYAQYVLLALGCVLLFIPI). Over 461–509 (VYQIRSQEKCYLFWSSSKKGSKDKEAIQAYSESLMTPAPKGTVLQEARL) the chain is Cytoplasmic.

Belongs to the CD36 family. As to quaternary structure, the C-terminal region binds to PDZK1. N-glycosylated. Post-translationally, the six cysteines of the extracellular domain are all involved in intramolecular disulfide bonds.

It is found in the cell membrane. The protein resides in the membrane. Its subcellular location is the caveola. In terms of biological role, receptor for different ligands such as phospholipids, cholesterol ester, lipoproteins, phosphatidylserine and apoptotic cells. Receptor for HDL, mediating selective uptake of cholesteryl ether and HDL-dependent cholesterol efflux. Also facilitates the flux of free and esterified cholesterol between the cell surface and apoB-containing lipoproteins and modified lipoproteins, although less efficiently than HDL. May be involved in the phagocytosis of apoptotic cells, via its phosphatidylserine binding activity. This is Scavenger receptor class B member 1 (SCARB1) from Sus scrofa (Pig).